Reading from the N-terminus, the 403-residue chain is S-adenosylmethionine synthase (403 aa).

ATP is bound at residue His-17. Position 19 (Asp-19) interacts with Mg(2+). Glu-45 contributes to the K(+) binding site. The L-methionine site is built by Glu-58 and Gln-104. A flexible loop region spans residues 104–114 (QSPDIAQGVDT). ATP is bound by residues 179–181 (DGK), 250–251 (KF), Asp-259, 265–266 (RK), Ala-282, and Lys-286. Residue Asp-259 coordinates L-methionine. Lys-290 lines the L-methionine pocket.

This sequence belongs to the AdoMet synthase family. As to quaternary structure, homotetramer; dimer of dimers. The cofactor is Mg(2+). Requires K(+) as cofactor.

It localises to the cytoplasm. The catalysed reaction is L-methionine + ATP + H2O = S-adenosyl-L-methionine + phosphate + diphosphate. It functions in the pathway amino-acid biosynthesis; S-adenosyl-L-methionine biosynthesis; S-adenosyl-L-methionine from L-methionine: step 1/1. Its function is as follows. Catalyzes the formation of S-adenosylmethionine (AdoMet) from methionine and ATP. The overall synthetic reaction is composed of two sequential steps, AdoMet formation and the subsequent tripolyphosphate hydrolysis which occurs prior to release of AdoMet from the enzyme. This Mycobacterium marinum (strain ATCC BAA-535 / M) protein is S-adenosylmethionine synthase.